The following is a 149-amino-acid chain: Calmodulin (149 aa).

An N-acetylalanine modification is found at alanine 2. EF-hand domains follow at residues 8–43 (EQVSEYKEAFSLFDKDGDGQITTKELGTVMRSLGQN), 44–79 (PSESELQDMINEVDADNNGTIDFPEFLTMMARKMKD), 81–116 (DSEEEIREAFKVFDRDNNGFISAAELRHVMTSIGEK), and 117–149 (LTDDEVDEMIREADQDGDGRIDYNEFVQLMMQK). 19 residues coordinate Ca(2+): aspartate 21, aspartate 23, aspartate 25, glutamine 27, glutamate 32, aspartate 57, aspartate 59, asparagine 61, threonine 63, glutamate 68, aspartate 94, aspartate 96, asparagine 98, glutamate 105, aspartate 130, aspartate 132, aspartate 134, arginine 136, and glutamate 141.

This sequence belongs to the calmodulin family.

Its function is as follows. Calmodulin mediates the control of a large number of enzymes, ion channels and other proteins by Ca(2+). Among the enzymes to be stimulated by the calmodulin-Ca(2+) complex are a number of protein kinases and phosphatases. The polypeptide is Calmodulin (camA) (Emericella nidulans (strain FGSC A4 / ATCC 38163 / CBS 112.46 / NRRL 194 / M139) (Aspergillus nidulans)).